We begin with the raw amino-acid sequence, 123 residues long: uncharacterized protein (123 aa).

A Phosphothreonine modification is found at Thr56. Phosphoserine occurs at positions 73, 87, 97, 113, and 119.

As to expression, highly expressed in the kidney (at protein level).

The protein localises to the cytoplasm. This is an uncharacterized protein from Felis catus (Cat).